The primary structure comprises 502 residues: 2,3-bisphosphoglycerate-independent phosphoglycerate mutase (502 aa).

Asp-13 and Ser-63 together coordinate Mn(2+). Ser-63 (phosphoserine intermediate) is an active-site residue. Residues His-117, 146–147, Arg-177, Arg-183, 251–254, and Lys-324 each bind substrate; these read RD and RSDR. 5 residues coordinate Mn(2+): Asp-389, His-393, Asp-430, His-431, and His-448.

It belongs to the BPG-independent phosphoglycerate mutase family. In terms of assembly, monomer. Requires Mn(2+) as cofactor.

It catalyses the reaction (2R)-2-phosphoglycerate = (2R)-3-phosphoglycerate. Its pathway is carbohydrate degradation; glycolysis; pyruvate from D-glyceraldehyde 3-phosphate: step 3/5. Its function is as follows. Catalyzes the interconversion of 2-phosphoglycerate and 3-phosphoglycerate. The protein is 2,3-bisphosphoglycerate-independent phosphoglycerate mutase of Ureaplasma urealyticum serovar 10 (strain ATCC 33699 / Western).